The sequence spans 167 residues: 2-C-methyl-D-erythritol 2,4-cyclodiphosphate synthase (167 aa).

A divalent metal cation is bound by residues Asp10 and His12. 4-CDP-2-C-methyl-D-erythritol 2-phosphate-binding positions include 10–12 (DVH) and 36–37 (HS). Residue His44 participates in a divalent metal cation binding. Residues 58-60 (NIG), 63-67 (FPNTN), 134-137 (TTSE), Phe141, and Arg144 each bind 4-CDP-2-C-methyl-D-erythritol 2-phosphate.

It belongs to the IspF family. In terms of assembly, homotrimer. Requires a divalent metal cation as cofactor.

It catalyses the reaction 4-CDP-2-C-methyl-D-erythritol 2-phosphate = 2-C-methyl-D-erythritol 2,4-cyclic diphosphate + CMP. It participates in isoprenoid biosynthesis; isopentenyl diphosphate biosynthesis via DXP pathway; isopentenyl diphosphate from 1-deoxy-D-xylulose 5-phosphate: step 4/6. In terms of biological role, involved in the biosynthesis of isopentenyl diphosphate (IPP) and dimethylallyl diphosphate (DMAPP), two major building blocks of isoprenoid compounds. Catalyzes the conversion of 4-diphosphocytidyl-2-C-methyl-D-erythritol 2-phosphate (CDP-ME2P) to 2-C-methyl-D-erythritol 2,4-cyclodiphosphate (ME-CPP) with a corresponding release of cytidine 5-monophosphate (CMP). The polypeptide is 2-C-methyl-D-erythritol 2,4-cyclodiphosphate synthase (Azobacteroides pseudotrichonymphae genomovar. CFP2).